The sequence spans 358 residues: Peptide chain release factor 2 (358 aa).

An N5-methylglutamine modification is found at glutamine 242.

The protein belongs to the prokaryotic/mitochondrial release factor family. Methylated by PrmC. Methylation increases the termination efficiency of RF2.

The protein resides in the cytoplasm. Peptide chain release factor 2 directs the termination of translation in response to the peptide chain termination codons UGA and UAA. The sequence is that of Peptide chain release factor 2 (prfB) from Borreliella burgdorferi (strain ATCC 35210 / DSM 4680 / CIP 102532 / B31) (Borrelia burgdorferi).